The following is an 84-amino-acid chain: Metallothionein type 2b (84 aa).

It belongs to the metallothionein superfamily. Type 15 family. Expressed in leaves, stems and roots.

The protein resides in the cytoplasm. It is found in the nucleus. In terms of biological role, metallothioneins have a high content of cysteine residues that bind various heavy metals. Probably involved in maintaining homeostasis of essential transition metals and detoxification of toxic metals. Increases cadmium and zinc tolerance when expressed in heterologous systems. Metal chelator binding 6 cadmium or 5 zinc atoms per protein. In Colocasia esculenta (Wild taro), this protein is Metallothionein type 2b.